The following is a 429-amino-acid chain: Glutamate dehydrogenase B (429 aa).

Residues Met1–Ala20 are disordered. Residue Lys119 is part of the active site.

The protein belongs to the Glu/Leu/Phe/Val dehydrogenases family. Homohexamer.

This is Glutamate dehydrogenase B (gdhB) from Halobacterium salinarum (strain ATCC 700922 / JCM 11081 / NRC-1) (Halobacterium halobium).